The primary structure comprises 313 residues: HTH-type transcriptional regulator CysB (313 aa).

Residues 1–59 (MNLHQFRFVREAVRQNFNLTEAAKALYTSQPGVSKAIIELEDELGVEIFTRHGKRVRSL) enclose the HTH lysR-type domain. Residues 19 to 38 (LTEAAKALYTSQPGVSKAII) constitute a DNA-binding region (H-T-H motif).

The protein belongs to the LysR transcriptional regulatory family.

Functionally, transcriptional regulator preferentially involved in the control of sulfate transport and reduction. Binds to DNA at target promoter regions. This Burkholderia cenocepacia (strain ATCC BAA-245 / DSM 16553 / LMG 16656 / NCTC 13227 / J2315 / CF5610) (Burkholderia cepacia (strain J2315)) protein is HTH-type transcriptional regulator CysB.